Consider the following 976-residue polypeptide: MKQKNNNGTILVVVMVLSWSRVVDLKSPSNTHTQDSVSVSLPGDIILGGLFPVHEKGEGAPCGPKVYNRGVQRLEAMLYAIDRVNNDPNILPGITIGVHILDTCSRDTYALNQSLQFVRASLNNLDTSGYECADGSSPQLRKNASSGPVFGVIGGSYSSVSLQVANLLRLFHIPQVSPASTAKTLSDKTRFDLFARTVPPDTFQSVALVDILKNFNWSYVSTIHSEGSYGEYGIEALHKEATERNVCIAVAEKVPSAADDKVFDSIISKLQKKPNARGVVLFTRAEDARRILQAAKRANLSQPFHWIASDGWGKQQKLLEGLEDIAEGAITVELQSEIIADFDRYMMQLTPETNQRNPWFAEYWEDTFNCVLTSLSVKPDTSNSANSTDNKIGVKAKTECDDSYRLSEKVGYEQESKTQFVVDAVYAFAYALHNLHNDRCNTQSDQTTETRKHLQSESVWYRKISTDTKSQACPDMANYDGKEFYNNYLLNVSFIDLAGSEVKFDRQGDGLARYDILNYQRQENSSGYQYKVIGKWFNGLQLNSETVVWNKETEQPTSACSLPCEVGMIKKQQGDTCCWICDSCESFEYVYDEFTCKDCGPGLWPYADKLSCYALDIQYMKWNSLFALIPMAIAIFGIALTSIVIVLFAKNHDTPLVRASGRELSYTLLFGILVCYCNTFALIAKPTIGSCVLQRFGIGVGFSIIYSALLTKTNRISRIFHSASKSAQRLKYISPQSQVVITTSLIAIQVLITMIWMVVEPPGTRFYYPDRREVILKCKIQDMSFLFSQLYNMILITICTIYAIKTRKIPENFNESKFIGFTMYTTCIIWLAFVPIYFGTGNSYEVQTTTLCISISLSASVALVCLYSPKVYILVFHPDKNVRKLTMNSTVYRRSAAAVAQGAPTSSGYSRTHAPGTSALTGGAVGTNASSSTLPTQNSPHLDEASAQTNVAHKTNGEFLPEVGERVEPICHIVNK.

A signal peptide spans 1–25 (MKQKNNNGTILVVVMVLSWSRVVDL). Topologically, residues 26-626 (KSPSNTHTQD…IQYMKWNSLF (601 aa)) are extracellular. Residues Asn-112 and Asn-143 are each glycosylated (N-linked (GlcNAc...) asparagine). Residues Ser-158 and 179–181 (AST) each bind L-glutamate. An N-linked (GlcNAc...) asparagine glycan is attached at Asn-216. An L-glutamate-binding site is contributed by Tyr-229. Asn-299 carries N-linked (GlcNAc...) asparagine glycosylation. An L-glutamate-binding site is contributed by Asp-310. The N-linked (GlcNAc...) asparagine glycan is linked to Asn-386. Lys-417 serves as a coordination point for L-glutamate. Asn-491 and Asn-524 each carry an N-linked (GlcNAc...) asparagine glycan. Residues 627–649 (ALIPMAIAIFGIALTSIVIVLFA) form a helical membrane-spanning segment. Residues 650–663 (KNHDTPLVRASGRE) lie on the Cytoplasmic side of the membrane. The helical transmembrane segment at 664 to 684 (LSYTLLFGILVCYCNTFALIA) threads the bilayer. Over 685 to 695 (KPTIGSCVLQR) the chain is Extracellular. The chain crosses the membrane as a helical span at residues 696–714 (FGIGVGFSIIYSALLTKTN). Residues 715 to 738 (RISRIFHSASKSAQRLKYISPQSQ) are Cytoplasmic-facing. The chain crosses the membrane as a helical span at residues 739-759 (VVITTSLIAIQVLITMIWMVV). Residues 760–782 (EPPGTRFYYPDRREVILKCKIQD) are Extracellular-facing. Residues 783 to 804 (MSFLFSQLYNMILITICTIYAI) traverse the membrane as a helical segment. Residues 805-817 (KTRKIPENFNESK) lie on the Cytoplasmic side of the membrane. The helical transmembrane segment at 818–840 (FIGFTMYTTCIIWLAFVPIYFGT) threads the bilayer. At 841 to 850 (GNSYEVQTTT) the chain is on the extracellular side. The helical transmembrane segment at 851 to 876 (LCISISLSASVALVCLYSPKVYILVF) threads the bilayer. The Cytoplasmic segment spans residues 877–976 (HPDKNVRKLT…VEPICHIVNK (100 aa)). The interval 920 to 946 (LTGGAVGTNASSSTLPTQNSPHLDEAS) is disordered. Over residues 927-946 (TNASSSTLPTQNSPHLDEAS) the composition is skewed to polar residues.

It belongs to the G-protein coupled receptor 3 family. As to expression, expressed in the neurons of the larval CNS from the beginning of the first until the third instar. Expression in the third-instar larval CNS is restricted to a discrete number of somas and projections in the brain lobes and in the ventral ganglion. In the ventral nerve cord, expression is detected both in somas and projections. Expressed in the antennal lobes, the optic lobes, the central complex and the median bundle in the adult CNS.

It is found in the cell membrane. Its function is as follows. G-protein coupled receptor for glutamate. Ligand binding causes a conformation change that triggers signaling via guanine nucleotide-binding proteins (G proteins) and modulates the activity of down-stream effectors. In Drosophila melanogaster (Fruit fly), this protein is Metabotropic glutamate receptor (mGluR).